Here is a 519-residue protein sequence, read N- to C-terminus: Protein amnionless (519 aa).

The signal sequence occupies residues 1 to 19 (MGAPGRVLLWLQLCALTRA). Residues 20–430 (AYKLWVPNTY…NAPGARSDLM (411 aa)) are Extracellular-facing. N-linked (GlcNAc...) asparagine glycosylation is found at Asn-35 and Asn-39. 6 disulfide bridges follow: Cys-43/Cys-152, Cys-193/Cys-267, Cys-259/Cys-265, Cys-277/Cys-303, Cys-288/Cys-304, and Cys-293/Cys-307. Residues 67 to 143 (SDMEELQDRK…VLASGAGFSA (77 aa)) form an interaction with CUBN region. The 53-residue stretch at 256–308 (PEACADPSGCVCGNAEVQPWICAALLQPLGGRCPQAACQDALRPEGQCCDLCG) folds into the VWFC domain. Residues 431 to 451 (GGLVAALLLLLLVLLVAALLL) form a helical membrane-spanning segment. Residues 452–519 (RRAGRLRWSR…YGEAEAEAEA (68 aa)) lie on the Cytoplasmic side of the membrane.

In terms of assembly, interacts (via extracellular region) with CUBN/cubilin, giving rise to a huge complex containing one AMN chain and three CUBN chains. Post-translationally, N-glycosylated. A soluble form arises by proteolytic removal of the membrane anchor. In terms of tissue distribution, detected in kidney cortex (at protein level).

Its subcellular location is the apical cell membrane. It localises to the cell membrane. The protein resides in the endosome membrane. It is found in the membrane. The protein localises to the coated pit. Its function is as follows. Membrane-bound component of the endocytic receptor formed by AMN and CUBN. Required for normal CUBN glycosylation and trafficking to the cell surface. The complex formed by AMN and CUBN is required for efficient absorption of vitamin B12. Required for normal CUBN-mediated protein transport in the kidney. The sequence is that of Protein amnionless (AMN) from Sus scrofa (Pig).